The sequence spans 447 residues: Probable butyrate:acetyl-CoA coenzyme A-transferase (447 aa).

220-224 lines the CoA pocket; that stretch reads GIGGT. The 5-glutamyl coenzyme A thioester intermediate role is filled by Glu-245. The CoA site is built by Ile-320 and Gly-343.

Belongs to the acetyl-CoA hydrolase/transferase family.

The protein resides in the cytoplasm. It catalyses the reaction butanoate + acetyl-CoA = butanoyl-CoA + acetate. It functions in the pathway lipid metabolism; butanoate metabolism. In terms of biological role, coenzyme A-transferase that converts butyrate to butyryl-CoA. Involved in the syntrophic growth of S.wolfei on butyrate in cooperation with methanogens or an appropriate hydrogen-scavenging bacterium, as part of the butyrate oxidation pathway. This Syntrophomonas wolfei subsp. wolfei (strain DSM 2245B / Goettingen) protein is Probable butyrate:acetyl-CoA coenzyme A-transferase.